We begin with the raw amino-acid sequence, 509 residues long: ATP synthase subunit alpha (509 aa).

169–176 (GDRQTGKT) lines the ATP pocket.

Belongs to the ATPase alpha/beta chains family. In terms of assembly, F-type ATPases have 2 components, CF(1) - the catalytic core - and CF(0) - the membrane proton channel. CF(1) has five subunits: alpha(3), beta(3), gamma(1), delta(1), epsilon(1). CF(0) has three main subunits: a(1), b(2) and c(9-12). The alpha and beta chains form an alternating ring which encloses part of the gamma chain. CF(1) is attached to CF(0) by a central stalk formed by the gamma and epsilon chains, while a peripheral stalk is formed by the delta and b chains.

The protein localises to the cell inner membrane. The catalysed reaction is ATP + H2O + 4 H(+)(in) = ADP + phosphate + 5 H(+)(out). Produces ATP from ADP in the presence of a proton gradient across the membrane. The alpha chain is a regulatory subunit. The polypeptide is ATP synthase subunit alpha (Sinorhizobium fredii (strain NBRC 101917 / NGR234)).